Consider the following 130-residue polypeptide: kinetoplast-associated protein 2-2 (130 aa).

Positions 1-10 (MLRRTVSNFA) are excised as a propeptide. Residues 95-130 (ETKQAQRAKAQKAQKKPKSAKSKVKKAAKKAKKSKK) form a disordered region. Residues 103–130 (KAQKAQKKPKSAKSKVKKAAKKAKKSKK) show a composition bias toward basic residues.

Belongs to the KAP family. In terms of assembly, associates with the kinetoplast DNA network.

Its subcellular location is the mitochondrion matrix. The protein localises to the kinetoplast. Histone H1-like DNA-binding protein involved in the organization and segregation of kinetoplast DNA (kDNA). The mitochondrial DNA of kinetoplastid protozoa consists of about 5,000 minicircles and 20 to 30 maxicircles. These circular DNAs are held together by catenation into a highly organized compact disk structure referred to as a kinetoplast DNA (kDNA) network. Binds preferentially to a specific fragment of minicircle DNA and is able to compact kDNA networks through DNA charge neutralization and condensation. This Crithidia fasciculata protein is kinetoplast-associated protein 2-2 (KAP2-2).